Consider the following 365-residue polypeptide: Aminomethyltransferase (365 aa).

It belongs to the GcvT family. The glycine cleavage system is composed of four proteins: P, T, L and H.

The enzyme catalyses N(6)-[(R)-S(8)-aminomethyldihydrolipoyl]-L-lysyl-[protein] + (6S)-5,6,7,8-tetrahydrofolate = N(6)-[(R)-dihydrolipoyl]-L-lysyl-[protein] + (6R)-5,10-methylene-5,6,7,8-tetrahydrofolate + NH4(+). The glycine cleavage system catalyzes the degradation of glycine. The polypeptide is Aminomethyltransferase (Synechococcus sp. (strain CC9902)).